Reading from the N-terminus, the 771-residue chain is Hyperosmolality-gated Ca2+ permeable channel 1.2 (771 aa).

Residues 1-4 lie on the Extracellular side of the membrane; it reads MATL. A helical membrane pass occupies residues 5–27; the sequence is QDIGVSAGINILSAFVFFIIFAV. Residues 28 to 100 are Cytoplasmic-facing; sequence LRLQPFNDRV…AGLDSVVYLR (73 aa). A helical transmembrane segment spans residues 101-125; the sequence is IYWLGLKIFTPIAVLAWAVLVPVNW. Residues 126-156 lie on the Extracellular side of the membrane; the sequence is TNNTLEMAKQLRNVTSSDIDKLSVSNIPEYS. Residues 157 to 178 form a helical membrane-spanning segment; sequence MRFWTHIVMAYAFTIWTCYVLM. Topologically, residues 179–374 are cytoplasmic; the sequence is KEYETIANMR…AIPYVSLTVR (196 aa). A helical membrane pass occupies residues 375 to 401; it reads RLIMHVAFFFLTFFFIVPIAFVQSLAT. The Extracellular segment spans residues 402-419; sequence IEGIVKAAPFLKFIVDDK. The chain crosses the membrane as a helical span at residues 420 to 445; sequence FMKSVIQGFLPGIALKLFLAFLPSIL. Residues 446–462 lie on the Cytoplasmic side of the membrane; it reads MIMSKFEGFTSISSLER. Residues 463–485 traverse the membrane as a helical segment; it reads RAAFRYYIFNLVNVFLASVIAGA. Topologically, residues 486–504 are extracellular; that stretch reads AFEQLNSFLNQSANQIPKT. The chain crosses the membrane as a helical span at residues 505-533; the sequence is IGVAIPMKATFFITYIMVDGWAGVAGEIL. The Cytoplasmic segment spans residues 534 to 566; the sequence is MLKPLIMFHLKNAFLVKTDKDREEAMDPGSIGF. A helical membrane pass occupies residues 567-588; that stretch reads NTGEPRIQLYFLLGLVYAPVTP. Methionine 589 is a topological domain (extracellular). A helical membrane pass occupies residues 590–605; sequence LLPFILVFFALAYIVY. Over 606 to 625 the chain is Cytoplasmic; that stretch reads RHQIINVYNQEYESAAAFWP. Residues 626–648 traverse the membrane as a helical segment; that stretch reads DVHGRVIAALVISQLLLMGLLGT. Over 649-651 the chain is Extracellular; it reads KHA. The chain crosses the membrane as a helical span at residues 652–670; the sequence is ALAAPFLIALPVLTIGFHH. At 671 to 771 the chain is on the cytoplasmic side; it reads FCKGRYEPAF…PSLPFSGKLV (101 aa). The interval 741-771 is disordered; sequence PTKRQSRRNTPAPSIISGDDSPSLPFSGKLV.

The protein belongs to the CSC1 (TC 1.A.17) family. Homodimer.

The protein resides in the membrane. Its activity is regulated as follows. Activated by hyperosmotic shock after mannitol or NaCl treatment. Activated by mechanical pressure: activated in response to membrane stretch and poke. Membrane lipids play a key role in mechanosensation by acting as a wall mainly formed by lipid head groups. In terms of biological role, acts as an osmosensitive calcium-permeable cation channel. Specifically conducts cations including Ca(2+), K(+) and Na(+) in vitro. Inactivation or closure of the channel is calcium-dependent. Mechanosensitive ion channel that converts mechanical stimuli into a flow of ions: activated in response to membrane stretch and poke. In Arabidopsis thaliana (Mouse-ear cress), this protein is Hyperosmolality-gated Ca2+ permeable channel 1.2.